The following is a 306-amino-acid chain: Armadillo repeat-containing protein 10 (306 aa).

A helical transmembrane segment spans residues 7 to 29 (VGWVAAGLVLGAGACYCIYRLTR). Ser43 bears the Phosphoserine mark. Phosphothreonine is present on Thr48. The stretch at 101-143 (GGIPIVGNKINSLNQSIKEKALNALNNLSVNVENQTKIKIYVP) is one ARM repeat.

Interacts with the DNA-binding domain of p53/TP53.

The protein resides in the endoplasmic reticulum membrane. Its subcellular location is the mitochondrion outer membrane. Its function is as follows. May play a role in cell survival and cell growth. May suppress the transcriptional activity of p53/TP53. This chain is Armadillo repeat-containing protein 10 (Armc10), found in Mus musculus (Mouse).